The primary structure comprises 304 residues: Voltage-dependent anion channel-forming protein YneE (304 aa).

4 helical membrane passes run 28–48 (LLLN…YTML), 50–70 (IKFT…FLGF), 209–229 (AYTL…PFAL), and 235–255 (YMTP…DALA).

The protein belongs to the anion channel-forming bestrophin (TC 1.A.46) family.

The protein resides in the cell membrane. In Salmonella typhi, this protein is Voltage-dependent anion channel-forming protein YneE (yneE).